A 288-amino-acid chain; its full sequence is Bifunctional protein FolD (288 aa).

Residues 166–168 (GAS) and isoleucine 232 contribute to the NADP(+) site.

The protein belongs to the tetrahydrofolate dehydrogenase/cyclohydrolase family. In terms of assembly, homodimer.

The catalysed reaction is (6R)-5,10-methylene-5,6,7,8-tetrahydrofolate + NADP(+) = (6R)-5,10-methenyltetrahydrofolate + NADPH. It catalyses the reaction (6R)-5,10-methenyltetrahydrofolate + H2O = (6R)-10-formyltetrahydrofolate + H(+). The protein operates within one-carbon metabolism; tetrahydrofolate interconversion. Functionally, catalyzes the oxidation of 5,10-methylenetetrahydrofolate to 5,10-methenyltetrahydrofolate and then the hydrolysis of 5,10-methenyltetrahydrofolate to 10-formyltetrahydrofolate. This Salmonella heidelberg (strain SL476) protein is Bifunctional protein FolD.